The following is a 360-amino-acid chain: mRNA cap guanine-N(7) methyltransferase (360 aa).

The segment at methionine 1–glutamine 62 is disordered. Over residues arginine 7–arginine 19 the composition is skewed to basic and acidic residues. One can recognise an mRNA cap 0 methyltransferase domain in the interval serine 83–arginine 358. Asparagine 92 to asparagine 93 serves as a coordination point for mRNA. Lysine 96, glycine 118, aspartate 140, aspartate 168, glutamine 191, and tyrosine 196 together coordinate S-adenosyl-L-methionine.

The protein belongs to the class I-like SAM-binding methyltransferase superfamily. mRNA cap 0 methyltransferase family. In terms of assembly, interacts with cdk9.

It localises to the nucleus. It catalyses the reaction a 5'-end (5'-triphosphoguanosine)-ribonucleoside in mRNA + S-adenosyl-L-methionine = a 5'-end (N(7)-methyl 5'-triphosphoguanosine)-ribonucleoside in mRNA + S-adenosyl-L-homocysteine. Its function is as follows. Responsible for methylating the 5'-cap structure of mRNAs. The protein is mRNA cap guanine-N(7) methyltransferase (pcm1) of Schizosaccharomyces pombe (strain 972 / ATCC 24843) (Fission yeast).